Here is a 38-residue protein sequence, read N- to C-terminus: Large ribosomal subunit protein bL36 (38 aa).

Belongs to the bacterial ribosomal protein bL36 family.

The sequence is that of Large ribosomal subunit protein bL36 from Fervidobacterium nodosum (strain ATCC 35602 / DSM 5306 / Rt17-B1).